Here is a 141-residue protein sequence, read N- to C-terminus: Large ribosomal subunit protein uL11 (141 aa).

The protein belongs to the universal ribosomal protein uL11 family. In terms of assembly, part of the ribosomal stalk of the 50S ribosomal subunit. Interacts with L10 and the large rRNA to form the base of the stalk. L10 forms an elongated spine to which L12 dimers bind in a sequential fashion forming a multimeric L10(L12)X complex. In terms of processing, one or more lysine residues are methylated.

Its function is as follows. Forms part of the ribosomal stalk which helps the ribosome interact with GTP-bound translation factors. This is Large ribosomal subunit protein uL11 from Chlamydia muridarum (strain MoPn / Nigg).